We begin with the raw amino-acid sequence, 349 residues long: Isopentenyl-diphosphate delta-isomerase (349 aa).

Residue 6–7 (RK) coordinates substrate. Residues 62–64 (AMT), serine 93, and asparagine 122 contribute to the FMN site. A substrate-binding site is contributed by glutamine 152. Residue glutamate 153 participates in Mg(2+) binding. FMN contacts are provided by residues lysine 184, threonine 214, 259–261 (GVR), and 280–281 (AG).

Belongs to the IPP isomerase type 2 family. In terms of assembly, homooctamer. Dimer of tetramers. FMN serves as cofactor. Requires NADPH as cofactor. The cofactor is Mg(2+).

Its subcellular location is the cytoplasm. It catalyses the reaction isopentenyl diphosphate = dimethylallyl diphosphate. Functionally, involved in the biosynthesis of isoprenoids. Catalyzes the 1,3-allylic rearrangement of the homoallylic substrate isopentenyl (IPP) to its allylic isomer, dimethylallyl diphosphate (DMAPP). This chain is Isopentenyl-diphosphate delta-isomerase, found in Geobacillus sp. (strain WCH70).